The following is a 159-amino-acid chain: U-actitoxin-Avd13b (159 aa).

The N-terminal stretch at 1 to 18 is a signal peptide; that stretch reads MKSIFLVFFAVCLVKAEA. Residues 19–26 constitute a propeptide that is removed on maturation; it reads GKGRKREP. 2 disulfide bridges follow: C33-C45 and C36-C52. Residues 59–60 constitute a propeptide that is removed on maturation; that stretch reads EP. 2 disulfide bridges follow: C67–C79 and C70–C86. Residues 93–94 constitute a propeptide that is removed on maturation; that stretch reads EP. Cystine bridges form between C101/C113 and C104/C120. Residues 127 to 128 constitute a propeptide that is removed on maturation; it reads EP. 2 disulfide bridges follow: C135–C147 and C138–C154.

This sequence belongs to the sea anemone BBH family.

It is found in the secreted. The protein resides in the nematocyst. Functionally, inhibits ion channels. This chain is U-actitoxin-Avd13b, found in Anemonia viridis (Snakelocks anemone).